Reading from the N-terminus, the 222-residue chain is Charged multivesicular body protein 2a (222 aa).

At M1 the chain carries N-acetylmethionine. Residues 12–53 are a coiled coil; the sequence is EELLRQNQRALNRAMRELDRERQKLETQEKKIIADIKKMAKQ. The segment at 56–222 is interaction with VPS4B; it reads MDAVRIMAKD…EERLKNLRRD (167 aa). S184 carries the post-translational modification Phosphoserine. Residue T185 is modified to Phosphothreonine. Phosphoserine is present on residues S188, S190, and S203. Residues 195–222 are a coiled coil; that stretch reads GKKAEAAASALADADADLEERLKNLRRD. The MIT-interacting motif motif lies at 210–220; it reads ADLEERLKNLR. The interval 217–222 is interaction with VTA1; the sequence is KNLRRD.

This sequence belongs to the SNF7 family. Probable core component of the endosomal sorting required for transport complex III (ESCRT-III). ESCRT-III components are thought to multimerize to form a flat lattice on the perimeter membrane of the endosome. Several assembly forms of ESCRT-III may exist that interact and act sequentially. In vitro, heteromerizes with CHMP3 (but not CHMP4) to form helical tubular structures that expose membrane-interacting sites on the outside whereas VPS4B can associate on the inside of the tubule. Interacts with CHMP1B, CHMP2B, CHMP3, CHMP4A, CHMP4B, CHMP4C and CHMP5. Interacts with VPS4A; the interaction is direct. Interacts with VPS4B; the interaction is direct. Interacts with MITD1. Interacts with VTA1; the interaction probably involves the open conformation of CHMP2A. Post-translationally, ISGylated in a CHMP5-dependent manner. Isgylation weakens and inhibits its interactions with VPS4A and VTA1 respectively.

The protein localises to the late endosome membrane. It is found in the nucleus envelope. Functionally, probable core component of the endosomal sorting required for transport complex III (ESCRT-III) which is involved in multivesicular bodies (MVBs) formation and sorting of endosomal cargo proteins into MVBs. MVBs contain intraluminal vesicles (ILVs) that are generated by invagination and scission from the limiting membrane of the endosome and mostly are delivered to lysosomes enabling degradation of membrane proteins, such as stimulated growth factor receptors, lysosomal enzymes and lipids. The MVB pathway appears to require the sequential function of ESCRT-O, -I,-II and -III complexes. ESCRT-III proteins mostly dissociate from the invaginating membrane before the ILV is released. The ESCRT machinery also functions in topologically equivalent membrane fission events, such as the terminal stages of cytokinesis. Together with SPAST, the ESCRT-III complex promotes nuclear envelope sealing and mitotic spindle disassembly during late anaphase. Recruited to the reforming nuclear envelope (NE) during anaphase by LEMD2. ESCRT-III proteins are believed to mediate the necessary vesicle extrusion and/or membrane fission activities, possibly in conjunction with the AAA ATPase VPS4. In terms of biological role, (Microbial infection) The ESCRT machinery functions in topologically equivalent membrane fission events, such as the budding of enveloped viruses (HIV-1 and other lentiviruses). Involved in HIV-1 p6- and p9-dependent virus release. This chain is Charged multivesicular body protein 2a (CHMP2A), found in Homo sapiens (Human).